A 180-amino-acid chain; its full sequence is uncharacterized protein (180 aa).

Residues 1–31 (MSTYEEEHGIQQNSRDYQEVGGTSQEEQRRQ) are disordered. Residue serine 2 is modified to N-acetylserine. Residues 109-153 (CSICYTNYLEDEYPLVVELPHCHHKFDLECLSVWLSRSTTCPLCR) form an RING-type zinc finger.

This is an uncharacterized protein from Saccharomyces cerevisiae (strain ATCC 204508 / S288c) (Baker's yeast).